We begin with the raw amino-acid sequence, 581 residues long: Terpene synthase 2, chloroplastic (581 aa).

A chloroplast-targeting transit peptide spans 1-34; the sequence is MYSLPGATMSAAPASIISSSSFVEPLLLAAASPA. R299, D336, D340, and R480 together coordinate substrate. Mg(2+)-binding residues include D336 and D340. Positions 336-340 match the DDXXD motif motif; it reads DDIFD. Residues D483, S487, and E491 each coordinate Mg(2+).

The protein belongs to the terpene synthase family. As to quaternary structure, monomer. The cofactor is Mg(2+).

Its subcellular location is the plastid. The protein resides in the chloroplast. It catalyses the reaction (2E,6E)-farnesyl diphosphate + H2O = (3S,6E)-nerolidol + diphosphate. It carries out the reaction (2E,6E,10E)-geranylgeranyl diphosphate + H2O = (6E,10E)-geranyllinalool + diphosphate. The catalysed reaction is (2E)-geranyl diphosphate + H2O = (S)-linalool + diphosphate. The protein operates within secondary metabolite biosynthesis; terpenoid biosynthesis. Its function is as follows. Involved in sesquiterpene (C15), diterpene (C20) and monoterpene (C10) biosynthesis. Has sesquiterpene synthase activity, converting farnesyl diphosphate to nerolidol, the precursor of the volatile C11-homoterpene (E)-3,8-dimethyl-1,4,7-nonatriene (DMNT). Has diterpene synthase activity, converting geranylgeranyl diphosphate to (E,E)-geranyllinalool, the precursor of the volatile C16-homoterpene (E,E)-4,8,12-trimethyltrideca 1,3,7,11-tetraene (TMTT). Has monoterpene synthase activity, converting geranyl diphosphate into linalool. Forms only the S-isomers of the three tertiary terpene alcohols. The protein is Terpene synthase 2, chloroplastic of Zea mays (Maize).